Consider the following 76-residue polypeptide: ATP synthase subunit c (76 aa).

2 helical membrane passes run Leu-13–Phe-33 and Phe-55–Ile-75.

This sequence belongs to the ATPase C chain family. F-type ATPases have 2 components, F(1) - the catalytic core - and F(0) - the membrane proton channel. F(1) has five subunits: alpha(3), beta(3), gamma(1), delta(1), epsilon(1). F(0) has three main subunits: a(1), b(2) and c(10-14). The alpha and beta chains form an alternating ring which encloses part of the gamma chain. F(1) is attached to F(0) by a central stalk formed by the gamma and epsilon chains, while a peripheral stalk is formed by the delta and b chains.

The protein localises to the cell membrane. Functionally, f(1)F(0) ATP synthase produces ATP from ADP in the presence of a proton or sodium gradient. F-type ATPases consist of two structural domains, F(1) containing the extramembraneous catalytic core and F(0) containing the membrane proton channel, linked together by a central stalk and a peripheral stalk. During catalysis, ATP synthesis in the catalytic domain of F(1) is coupled via a rotary mechanism of the central stalk subunits to proton translocation. Its function is as follows. Key component of the F(0) channel; it plays a direct role in translocation across the membrane. A homomeric c-ring of between 10-14 subunits forms the central stalk rotor element with the F(1) delta and epsilon subunits. This is ATP synthase subunit c from Bifidobacterium longum subsp. infantis (strain ATCC 15697 / DSM 20088 / JCM 1222 / NCTC 11817 / S12).